The following is a 758-amino-acid chain: Long-chain-alcohol oxidase FAO1 (758 aa).

A run of 2 helical transmembrane segments spans residues 102–122 (IVLR…LVCL) and 155–175 (PLAR…YFTW). An FAD-binding site is contributed by 246-261 (CDAVVVGSGCGGGVAA). H689 acts as the Proton acceptor in catalysis.

Belongs to the GMC oxidoreductase family.

It localises to the membrane. It catalyses the reaction a long-chain primary fatty alcohol + O2 = a long-chain fatty aldehyde + H2O2. Long-chain fatty alcohol oxidase involved in the omega-oxidation pathway of lipid degradation. In Arabidopsis thaliana (Mouse-ear cress), this protein is Long-chain-alcohol oxidase FAO1 (FAO1).